Here is a 919-residue protein sequence, read N- to C-terminus: MLX-interacting protein (919 aa).

The tract at residues 1–72 (MAADVFMCSP…AGPGREEPPR (72 aa)) is disordered. An N-acetylalanine modification is found at Ala-2. Ser-9, Ser-27, Ser-33, and Ser-39 each carry phosphoserine. A compositionally biased stretch (acidic residues) spans 27-37 (SEDDDDSDTDE). The span at 44-56 (SGAATPARAHASA) shows a compositional bias: low complexity. The interval 73 to 327 (RQQIIHSGHF…PLQPNLDFMD (255 aa)) is required for cytoplasmic localization. Positions 322-445 (NLDFMDTFEP…LLSPSPAPPP (124 aa)) are transactivation domain. 2 disordered regions span residues 542 to 562 (KPVSLTGGRPKQPHKIVPAPK) and 633 to 712 (DLGH…SDPK). At Ser-669 the chain carries Phosphoserine. Positions 670-685 (PQVTVTGPSRDCPNSG) are enriched in polar residues. The segment covering 686–706 (QASPCASEQSPSPQSPQNNCS) has biased composition (low complexity). Positions 719 to 769 (NRQMKHISAEQKRRFNIKMCFDMLNSLISNNSKLTSHAITLQKTVEYITKL) constitute a bHLH domain. The tract at residues 769–790 (LQQERGQMQEEARRLREEIEEL) is leucine-zipper. The tract at residues 832-881 (WKFWIFSIIIKPLFESFKGMVSTSSLEELHRTALSWLDQHCSLPILRPMV) is mediates heterotypic interactions between MLXIP and MLX and is required for cytoplasmic localization.

In terms of assembly, efficient DNA binding requires dimerization with another bHLH protein. Binds DNA as a homodimer or a heterodimer with MLX. In terms of tissue distribution, widely expressed in adult tissues. Most abundant in skeletal muscle.

It localises to the cytoplasm. Its subcellular location is the nucleus. It is found in the mitochondrion outer membrane. In terms of biological role, binds DNA as a heterodimer with MLX and activates transcription. Binds to the canonical E box sequence 5'-CACGTG-3'. Plays a role in transcriptional activation of glycolytic target genes. Involved in glucose-responsive gene regulation. The sequence is that of MLX-interacting protein from Homo sapiens (Human).